A 413-amino-acid polypeptide reads, in one-letter code: Clusterin-associated protein 1 (413 aa).

The stretch at 185 to 308 (MRIAIKDLLA…KEEEKRLLKS (124 aa)) forms a coiled coil. Residues 303–413 (KRLLKSGSND…EPLDESDNDF (111 aa)) form a disordered region. Acidic residues-rich tracts occupy residues 312-328 (DDSD…DSEL) and 360-388 (DSDE…EDES). Residues S314, S324, and S326 each carry the phosphoserine modification. The residue at position 409 (S409) is a Phosphoserine.

Belongs to the CLUAP1 family. As to quaternary structure, interacts with CLU/clusterin. Interacts with UBXN10; the interaction is direct. Expressed in all tissues tested including heart, kidney, skeletal muscle, eye, liver, ovary, oviduct, testes, lung and brain. Elevated levels in multiciliated cells such as the bronchioles of the lungs, ependymal cells of the brain and cells with a single primary cilia of heart and kidney.

The protein localises to the cell projection. The protein resides in the cilium. Its subcellular location is the nucleus. Required for cilia biogenesis. Appears to function within the multiple intraflagellar transport complex B (IFT-B). Key regulator of hedgehog signaling. This Mus musculus (Mouse) protein is Clusterin-associated protein 1 (Cluap1).